The sequence spans 1074 residues: Insulin receptor substrate 2-A (1074 aa).

The segment at 1 to 64 (MAGVLCPTEE…PPASAAEDDV (64 aa)) is disordered. 2 short sequence motifs (YXXM motif) span residues 33–36 (YRRM) and 145–148 (YFAM). Positions 63–168 (DVRKRGYLRK…WYQALSELIN (106 aa)) constitute a PH domain. In terms of domain architecture, IRS-type PTB spans 193 to 297 (FKEVWQVNVK…DTMKALKAYS (105 aa)). 3 disordered regions span residues 326–370 (PPSQ…RPFR), 426–461 (CSSS…SDEY), and 475–510 (SNTP…SRDD). The span at 347–361 (SAKNNSFRFRTSSEG) shows a compositional bias: polar residues. 2 stretches are compositionally biased toward low complexity: residues 426-435 (CSSSGHGSAS) and 442-454 (SSSS…SDGG). The span at 475–504 (SNTPDSLGNTPPIQEENTLSDYMSMSTHSQ) shows a compositional bias: polar residues. 6 short sequence motifs (YXXM motif) span residues 496–499 (YMSM), 592–595 (YMPM), 605–608 (YLPM), 631–634 (YMMM), 663–666 (YMDM), and 710–713 (YVPM). The segment at 801–821 (TPYSLSADGSPSSLGSSCDHR) is disordered. The span at 804 to 817 (SLSADGSPSSLGSS) shows a compositional bias: low complexity. The YXXM motif 9 motif lies at 888–891 (YTTM).

In terms of processing, phosphorylated by INSR.

In terms of biological role, potentiates insulin signaling. This Xenopus laevis (African clawed frog) protein is Insulin receptor substrate 2-A (irs2-a).